The primary structure comprises 57 residues: DNA-directed RNA polymerase subunit Rpo6 (57 aa).

This sequence belongs to the archaeal Rpo6/eukaryotic RPB6 RNA polymerase subunit family. As to quaternary structure, part of the RNA polymerase complex.

It is found in the cytoplasm. The catalysed reaction is RNA(n) + a ribonucleoside 5'-triphosphate = RNA(n+1) + diphosphate. Its function is as follows. DNA-dependent RNA polymerase (RNAP) catalyzes the transcription of DNA into RNA using the four ribonucleoside triphosphates as substrates. The chain is DNA-directed RNA polymerase subunit Rpo6 from Thermococcus onnurineus (strain NA1).